Reading from the N-terminus, the 930-residue chain is Alanine--tRNA ligase (930 aa).

Zn(2+)-binding residues include histidine 595, histidine 599, cysteine 700, and histidine 704.

This sequence belongs to the class-II aminoacyl-tRNA synthetase family. Requires Zn(2+) as cofactor.

The protein resides in the cytoplasm. The catalysed reaction is tRNA(Ala) + L-alanine + ATP = L-alanyl-tRNA(Ala) + AMP + diphosphate. Its function is as follows. Catalyzes the attachment of alanine to tRNA(Ala) in a two-step reaction: alanine is first activated by ATP to form Ala-AMP and then transferred to the acceptor end of tRNA(Ala). Also edits incorrectly charged Ser-tRNA(Ala) and Gly-tRNA(Ala) via its editing domain. This Malacoplasma penetrans (strain HF-2) (Mycoplasma penetrans) protein is Alanine--tRNA ligase.